The primary structure comprises 396 residues: Arginine biosynthesis bifunctional protein ArgJ (396 aa).

The substrate site is built by Thr147, Lys173, Thr184, Glu270, Asn391, and Ser396. Residue Thr184 is the Nucleophile of the active site.

Belongs to the ArgJ family. As to quaternary structure, heterotetramer of two alpha and two beta chains.

It localises to the cytoplasm. It catalyses the reaction N(2)-acetyl-L-ornithine + L-glutamate = N-acetyl-L-glutamate + L-ornithine. The catalysed reaction is L-glutamate + acetyl-CoA = N-acetyl-L-glutamate + CoA + H(+). Its pathway is amino-acid biosynthesis; L-arginine biosynthesis; L-ornithine and N-acetyl-L-glutamate from L-glutamate and N(2)-acetyl-L-ornithine (cyclic): step 1/1. It participates in amino-acid biosynthesis; L-arginine biosynthesis; N(2)-acetyl-L-ornithine from L-glutamate: step 1/4. Functionally, catalyzes two activities which are involved in the cyclic version of arginine biosynthesis: the synthesis of N-acetylglutamate from glutamate and acetyl-CoA as the acetyl donor, and of ornithine by transacetylation between N(2)-acetylornithine and glutamate. This chain is Arginine biosynthesis bifunctional protein ArgJ, found in Lactococcus lactis subsp. lactis (strain IL1403) (Streptococcus lactis).